Here is a 131-residue protein sequence, read N- to C-terminus: Large ribosomal subunit protein bL21 (131 aa).

Residues 111–131 (VAAATGTADARRAAHNASAKE) are disordered.

This sequence belongs to the bacterial ribosomal protein bL21 family. Part of the 50S ribosomal subunit. Contacts protein L20.

Functionally, this protein binds to 23S rRNA in the presence of protein L20. The sequence is that of Large ribosomal subunit protein bL21 from Cereibacter sphaeroides (strain ATCC 17029 / ATH 2.4.9) (Rhodobacter sphaeroides).